Reading from the N-terminus, the 478-residue chain is Ribulose bisphosphate carboxylase large chain (478 aa).

A propeptide spanning residues 1 to 2 (MS) is cleaved from the precursor. Proline 3 carries the N-acetylproline modification. Position 14 is an N6,N6,N6-trimethyllysine (lysine 14). Asparagine 123 and threonine 173 together coordinate substrate. Lysine 175 functions as the Proton acceptor in the catalytic mechanism. Lysine 177 contributes to the substrate binding site. Residues lysine 201, aspartate 203, and glutamate 204 each coordinate Mg(2+). An N6-carboxylysine modification is found at lysine 201. Histidine 294 acts as the Proton acceptor in catalysis. Residues arginine 295, histidine 327, and serine 379 each contribute to the substrate site.

The protein belongs to the RuBisCO large chain family. Type I subfamily. In terms of assembly, heterohexadecamer of 8 large chains and 8 small chains; disulfide-linked. The disulfide link is formed within the large subunit homodimers. Mg(2+) serves as cofactor. Post-translationally, the disulfide bond which can form in the large chain dimeric partners within the hexadecamer appears to be associated with oxidative stress and protein turnover.

Its subcellular location is the plastid. It is found in the chloroplast. The catalysed reaction is 2 (2R)-3-phosphoglycerate + 2 H(+) = D-ribulose 1,5-bisphosphate + CO2 + H2O. It catalyses the reaction D-ribulose 1,5-bisphosphate + O2 = 2-phosphoglycolate + (2R)-3-phosphoglycerate + 2 H(+). Functionally, ruBisCO catalyzes two reactions: the carboxylation of D-ribulose 1,5-bisphosphate, the primary event in carbon dioxide fixation, as well as the oxidative fragmentation of the pentose substrate in the photorespiration process. Both reactions occur simultaneously and in competition at the same active site. The sequence is that of Ribulose bisphosphate carboxylase large chain from Neurachne tenuifolia.